The sequence spans 399 residues: Mitochondrial glycine transporter (399 aa).

Solcar repeat units follow at residues Ile-35–Val-137, Leu-164–Asn-251, and Gly-266–Trp-374. Helical transmembrane passes span Leu-41 to Gln-66, Gly-112 to Ala-138, Leu-170 to Glu-195, Gly-226 to Lys-249, Val-270 to Met-296, and Gly-349 to Ile-367. Positions Glu-379–Val-399 are disordered.

Belongs to the mitochondrial carrier (TC 2.A.29) family. SLC25A38 subfamily.

It localises to the mitochondrion inner membrane. The catalysed reaction is glycine(in) = glycine(out). Mitochondrial glycine transporter that imports glycine into the mitochondrial matrix. Plays an important role in providing glycine for the first enzymatic step in heme biosynthesis, the condensation of glycine with succinyl-CoA to produce 5-aminolevulinate (ALA) in the mitochondrial matrix. The chain is Mitochondrial glycine transporter from Mycosarcoma maydis (Corn smut fungus).